The chain runs to 164 residues: Dehydrin Rab16B (164 aa).

Residues 1-164 (MENYQGQHGY…KIKEKLPGQH (164 aa)) form a disordered region. The segment covering 25–53 (GQYGGGATAPGGGHGAMGMGGHAGAGAGG) has biased composition (gly residues). Over residues 107–117 (GNNQQQQQMMG) the composition is skewed to low complexity. Positions 147-164 (GEKKGFMDKIKEKLPGQH) are enriched in basic and acidic residues.

Belongs to the plant dehydrin family.

This Oryza sativa subsp. indica (Rice) protein is Dehydrin Rab16B (RAB16B).